The following is a 337-amino-acid chain: tRNA N6-adenosine threonylcarbamoyltransferase (337 aa).

Histidine 111 and histidine 115 together coordinate Fe cation. Substrate is bound by residues 134–138 (LVSGG), aspartate 167, glycine 180, and asparagine 272. Aspartate 300 contributes to the Fe cation binding site.

This sequence belongs to the KAE1 / TsaD family. Fe(2+) serves as cofactor.

The protein resides in the cytoplasm. It catalyses the reaction L-threonylcarbamoyladenylate + adenosine(37) in tRNA = N(6)-L-threonylcarbamoyladenosine(37) in tRNA + AMP + H(+). Required for the formation of a threonylcarbamoyl group on adenosine at position 37 (t(6)A37) in tRNAs that read codons beginning with adenine. Is involved in the transfer of the threonylcarbamoyl moiety of threonylcarbamoyl-AMP (TC-AMP) to the N6 group of A37, together with TsaE and TsaB. TsaD likely plays a direct catalytic role in this reaction. This Klebsiella pneumoniae (strain 342) protein is tRNA N6-adenosine threonylcarbamoyltransferase.